We begin with the raw amino-acid sequence, 101 residues long: MNSHFASAHTPFYINTKEGRYLVLKAVKVCDVRTVECEGSKASCVLKVDKPSSPACERRPSSPSRCERMNNPRKQVPFMRTDMLQNMFAANRDNVASRLLN.

The disordered stretch occupies residues 51–73 (PSSPACERRPSSPSRCERMNNPR). 2 positions are modified to phosphoserine: S53 and S62. Basic and acidic residues predominate over residues 56–70 (CERRPSSPSRCERMN).

It belongs to the orthopoxvirus OPG062 family. Self-associates to form high molecular-weight forms. Interacts with protein OPG157/A30. Interacts with host RICTOR and RPTOR; these interactions disrupt the mTORC1 and mTORC2 crosstalk. In terms of processing, phosphorylated on two serines. While these phosphorylations do not play a role in virion assembly; they are essential for the interaction with host RICTOR and RPTOR.

The protein localises to the virion. Functionally, plays an essential role in virion assembly and morphogenesis. Also plays a role in the inhibition of host immune response by dysregulating mTOR. Sequesters host RICTOR and RPTOR, thereby disrupting mTORC1 and mTORC2 crosstalk. In turn, blocks the host antiviral response in part through mTOR-dependent degradation of cGAS, the primary poxvirus sensor. This chain is Phosphoprotein OPG062 (OPG062), found in Vaccinia virus (strain Western Reserve) (VACV).